The following is a 146-amino-acid chain: Ferric uptake regulation protein 2 (146 aa).

Positions 96 and 99 each coordinate Zn(2+).

The protein belongs to the Fur family.

The protein resides in the cytoplasm. In terms of biological role, acts as a global negative controlling element, employing Fe(2+) as a cofactor to bind the operator of the repressed genes. This is Ferric uptake regulation protein 2 (fur2) from Mycolicibacterium fortuitum (Mycobacterium fortuitum).